A 241-amino-acid polypeptide reads, in one-letter code: Carboxy-S-adenosyl-L-methionine synthase (241 aa).

S-adenosyl-L-methionine contacts are provided by residues Tyr-38, 63-65 (GCS), 88-89 (DN), 116-117 (DI), Asn-131, and Arg-198.

It belongs to the class I-like SAM-binding methyltransferase superfamily. Cx-SAM synthase family. In terms of assembly, homodimer.

The catalysed reaction is prephenate + S-adenosyl-L-methionine = carboxy-S-adenosyl-L-methionine + 3-phenylpyruvate + H2O. Catalyzes the conversion of S-adenosyl-L-methionine (SAM) to carboxy-S-adenosyl-L-methionine (Cx-SAM). The polypeptide is Carboxy-S-adenosyl-L-methionine synthase (Pseudoalteromonas translucida (strain TAC 125)).